The primary structure comprises 367 residues: Dual specificity protein phosphatase 1 (367 aa).

The Rhodanese domain occupies 20 to 137; the sequence is GAAQCLLLDC…FSASCPELCS (118 aa). The Tyrosine-protein phosphatase domain occupies 173–314; that stretch reads GPVEILSFLY…LLQFESQVLA (142 aa). Cysteine 258 (phosphocysteine intermediate) is an active-site residue. Phosphoserine; by MAPK1 and MAPK3 is present on residues serine 359 and serine 364.

The protein belongs to the protein-tyrosine phosphatase family. Non-receptor class dual specificity subfamily. In terms of processing, phosphorylation at Ser-359 and Ser-364 by MAPK1/ERK2 and MAPK3/ERK1 reduces its rate of degradation. 'Lys-48'-linked polyubiquitinated by NEURL3, leading to proteasomal degradation.

It is found in the nucleus. It catalyses the reaction O-phospho-L-tyrosyl-[protein] + H2O = L-tyrosyl-[protein] + phosphate. The enzyme catalyses O-phospho-L-seryl-[protein] + H2O = L-seryl-[protein] + phosphate. The catalysed reaction is O-phospho-L-threonyl-[protein] + H2O = L-threonyl-[protein] + phosphate. In terms of biological role, dual specificity phosphatase that dephosphorylates MAP kinase MAPK1/ERK2 on both 'Thr-183' and 'Tyr-185', regulating its activity during the meiotic cell cycle. The polypeptide is Dual specificity protein phosphatase 1 (Mus musculus (Mouse)).